The chain runs to 359 residues: tRNA N6-adenosine threonylcarbamoyltransferase (359 aa).

The Fe cation site is built by H115 and H119. Substrate contacts are provided by residues 137-141, D170, G183, and N283; that span reads LVSGG. D311 serves as a coordination point for Fe cation. The interval 328–359 is disordered; the sequence is APDSLDIAPRSRWPLDEKSAPVFGTGRRGAKA.

It belongs to the KAE1 / TsaD family. Fe(2+) serves as cofactor.

The protein localises to the cytoplasm. It carries out the reaction L-threonylcarbamoyladenylate + adenosine(37) in tRNA = N(6)-L-threonylcarbamoyladenosine(37) in tRNA + AMP + H(+). Functionally, required for the formation of a threonylcarbamoyl group on adenosine at position 37 (t(6)A37) in tRNAs that read codons beginning with adenine. Is involved in the transfer of the threonylcarbamoyl moiety of threonylcarbamoyl-AMP (TC-AMP) to the N6 group of A37, together with TsaE and TsaB. TsaD likely plays a direct catalytic role in this reaction. In Brucella canis (strain ATCC 23365 / NCTC 10854 / RM-666), this protein is tRNA N6-adenosine threonylcarbamoyltransferase.